A 689-amino-acid chain; its full sequence is Elongation factor G (689 aa).

Positions 8-282 (DKVRNIGIMA…AIVRYLPSPL (275 aa)) constitute a tr-type G domain. Residues 17–24 (AHIDAGKT), 81–85 (DTPGH), and 135–138 (NKMD) contribute to the GTP site.

Belongs to the TRAFAC class translation factor GTPase superfamily. Classic translation factor GTPase family. EF-G/EF-2 subfamily.

The protein resides in the cytoplasm. Catalyzes the GTP-dependent ribosomal translocation step during translation elongation. During this step, the ribosome changes from the pre-translocational (PRE) to the post-translocational (POST) state as the newly formed A-site-bound peptidyl-tRNA and P-site-bound deacylated tRNA move to the P and E sites, respectively. Catalyzes the coordinated movement of the two tRNA molecules, the mRNA and conformational changes in the ribosome. This Thermoanaerobacter pseudethanolicus (strain ATCC 33223 / 39E) (Clostridium thermohydrosulfuricum) protein is Elongation factor G.